The chain runs to 2570 residues: Stabilin-1 (2570 aa).

The first 25 residues, 1 to 25, serve as a signal peptide directing secretion; sequence MAGPRGLLPLCLLAFCLAGFSFVRG. Over 26–2478 the chain is Extracellular; sequence QVLFKGCDVK…LAPEAPPVAA (2453 aa). 4 consecutive EGF-like domains span residues 110 to 148, 156 to 193, 195 to 229, and 232 to 271; these read HECP…SACQ, FGPD…PHCD, ELPV…QGSE, and APNP…MVCL. 11 disulfide bridges follow: Cys112-Cys126, Cys120-Cys136, Cys138-Cys147, Cys160-Cys171, Cys164-Cys181, Cys183-Cys192, Cys199-Cys210, Cys204-Cys217, Cys236-Cys247, Cys241-Cys257, and Cys259-Cys270. Asn133 carries an N-linked (GlcNAc...) asparagine glycan. 7 N-linked (GlcNAc...) asparagine glycosylation sites follow: Asn286, Asn312, Asn413, Asn606, Asn673, Asn712, and Asn745. FAS1 domains lie at 356-494 and 506-641; these read YGHL…TGLR and KRTI…DGIL. The 41-residue stretch at 728–768 folds into the EGF-like 5 domain; it reads DCTQCPGGFSNPCYGKGNCSDGIQGNGACLCFPDYKGIACH. 3 cysteine pairs are disulfide-bonded: Cys732/Cys746, Cys740/Cys756, and Cys758/Cys767. The N-linked (GlcNAc...) asparagine glycan is linked to Asn816. 4 EGF-like domains span residues 818–858, 861–903, 904–946, and 947–986; these read SMGD…DGFS, PSNP…RVCV, AIDE…YQCS, and PIDP…DGFS. Intrachain disulfides connect Cys822–Cys837, Cys831–Cys846, Cys865–Cys879, Cys873–Cys889, Cys891–Cys902, Cys908–Cys922, Cys916–Cys932, Cys934–Cys945, Cys951–Cys964, and Cys958–Cys974. FAS1 domains follow at residues 988–1118 and 1128–1253; these read YGDI…SQVL and GQGL…SGVL. N-linked (GlcNAc...) asparagine glycans are attached at residues Asn1087, Asn1096, Asn1170, Asn1178, Asn1222, and Asn1274. The 66-residue stretch at 1327 to 1392 folds into the Laminin EGF-like 1 domain; sequence TLCEPCPGGL…CDCAHGLCQE (66 aa). 3 disulfides stabilise this stretch: Cys1332-Cys1346, Cys1340-Cys1356, and Cys1358-Cys1367. A glycan (N-linked (GlcNAc...) asparagine) is linked at Asn1378. Disulfide bonds link Cys1379–Cys1390, Cys1383–Cys1400, Cys1402–Cys1411, Cys1420–Cys1430, Cys1424–Cys1440, Cys1442–Cys1453, Cys1459–Cys1472, Cys1466–Cys1482, Cys1484–Cys1495, Cys1501–Cys1514, Cys1508–Cys1524, Cys1526–Cys1538, Cys1544–Cys1557, Cys1551–Cys1567, and Cys1569–Cys1581. 4 consecutive EGF-like domains span residues 1416–1454, 1455–1496, 1497–1539, and 1540–1582; these read TSPQ…IFCS, EVDP…ELCQ, EINS…RTCE, and LLDP…LTCR. Asn1471 is a glycosylation site (N-linked (GlcNAc...) asparagine). FAS1 domains lie at 1582-1708 and 1724-1864; these read RARV…DRVL and PRRN…DQLL. 2 N-linked (GlcNAc...) asparagine glycosylation sites follow: Asn1626 and Asn1727. In terms of domain architecture, Laminin EGF-like 2 spans 1966-2031; sequence SECQACPGGP…RCTVHGRCDE (66 aa). 15 cysteine pairs are disulfide-bonded: Cys1971–Cys1985, Cys1979–Cys1995, Cys1997–Cys2006, Cys2018–Cys2029, Cys2023–Cys2039, Cys2041–Cys2050, Cys2060–Cys2070, Cys2064–Cys2076, Cys2078–Cys2089, Cys2095–Cys2108, Cys2102–Cys2117, Cys2119–Cys2130, Cys2136–Cys2150, Cys2144–Cys2160, and Cys2162–Cys2173. EGF-like domains are found at residues 2056 to 2090, 2091 to 2131, and 2132 to 2174; these read LQPV…RVCT, VADL…WSCR, and ARNP…LQCL. N-linked (GlcNAc...) asparagine glycosylation occurs at Asn2107. Residues 2206-2301 form the Link domain; that stretch reads RAGVFHLQAT…SERWDAYCFR (96 aa). N-linked (GlcNAc...) asparagine glycans are attached at residues Asn2222, Asn2261, Asn2290, Asn2334, Asn2347, Asn2379, Asn2393, Asn2400, and Asn2424. Intrachain disulfides connect Cys2230–Cys2299 and Cys2254–Cys2275. Residues 2322 to 2459 form the FAS1 7 domain; it reads NGKLLDVLAA…GIIHALASPL (138 aa). Residues 2479–2499 traverse the membrane as a helical segment; it reads GVGAVLAAGALLGLVAGALYL. Over 2500 to 2570 the chain is Cytoplasmic; sequence RARGKPMGFG…PDTQRILTVK (71 aa).

As to quaternary structure, interacts with CHID1. High levels found in spleen, lymph node, liver and placenta. Also expressed in endothelial cells.

It is found in the membrane. Its function is as follows. Acts as a scavenger receptor for acetylated low density lipoprotein. Binds to both Gram-positive and Gram-negative bacteria and may play a role in defense against bacterial infection. When inhibited in endothelial tube formation assays, there is a marked decrease in cell-cell interactions, suggesting a role in angiogenesis. Involved in the delivery of newly synthesized CHID1/SI-CLP from the biosynthetic compartment to the endosomal/lysosomal system. This chain is Stabilin-1 (STAB1), found in Homo sapiens (Human).